A 1607-amino-acid polypeptide reads, in one-letter code: Laminin subunit gamma-1 (1607 aa).

An N-terminal signal peptide occupies residues Met1–Ala33. Residues Arg44–Arg283 enclose the Laminin N-terminal domain. Residues Asn58 and Asn132 are each glycosylated (N-linked (GlcNAc...) asparagine). Intrachain disulfides connect Cys284–Cys293, Cys286–Cys303, Cys305–Cys314, Cys340–Cys349, Cys342–Cys365, Cys368–Cys377, Cys380–Cys393, Cys396–Cys408, Cys398–Cys414, Cys416–Cys425, Cys428–Cys440, Cys443–Cys454, Cys445–Cys461, Cys463–Cys472, and Cys475–Cys490. Laminin EGF-like domains follow at residues Cys284–Pro339, Cys340–Pro395, Cys396–Pro442, and Cys443–Pro492. A Laminin EGF-like 5; first part domain is found at Cys493–Cys502. In terms of domain architecture, Laminin IV type A spans Asp512–Ser687. N-linked (GlcNAc...) asparagine glycans are attached at residues Asn574 and Asn648. The 34-residue stretch at Cys688 to Leu721 folds into the Laminin EGF-like 5; second part domain. 24 disulfide bridges follow: Cys722–Cys731, Cys724–Cys738, Cys740–Cys749, Cys752–Cys768, Cys771–Cys779, Cys773–Cys790, Cys793–Cys802, Cys805–Cys823, Cys826–Cys840, Cys828–Cys847, Cys850–Cys859, Cys862–Cys879, Cys882–Cys896, Cys884–Cys903, Cys905–Cys914, Cys917–Cys930, Cys933–Cys945, Cys935–Cys952, Cys954–Cys963, Cys966–Cys978, Cys981–Cys993, Cys983–Cys999, Cys1001–Cys1010, and Cys1013–Cys1026. 2 consecutive Laminin EGF-like domains span residues Cys722–Pro770 and Cys771–Pro825. One can recognise a Laminin EGF-like 8; nidogen-binding domain in the interval Cys826–Ala881. Laminin EGF-like domains lie at Cys882 to Arg932, Cys933 to Pro980, and Cys981 to Glu1028. N-linked (GlcNAc...) asparagine glycosylation is found at Asn1020 and Asn1105. Residues Cys1029 to Pro1607 form a domain II and I region. A coiled-coil region spans residues Arg1034–Leu1594. Position 1147 is a phosphoserine (Ser1147). Residues Asn1159, Asn1173, Asn1203, Asn1221, Asn1239, Asn1378, Asn1393, and Asn1437 are each glycosylated (N-linked (GlcNAc...) asparagine). Phosphoserine is present on Ser1491.

Laminin is a complex glycoprotein, consisting of three different polypeptide chains (alpha, beta, gamma), which are bound to each other by disulfide bonds into a cross-shaped molecule comprising one long and three short arms with globules at each end. Gamma-1 is a subunit of laminin-1 (laminin-111 or EHS laminin), laminin-2 (laminin-211 or merosin), laminin-3 (laminin-121 or S-laminin), laminin-4 (laminin-221 or S-merosin), laminin-6 (laminin-311 or K-laminin), laminin-7 (laminin-321 or KS-laminin), laminin-8 (laminin-411), laminin-9 (laminin-421), laminin-10 (laminin-511) and laminin-11 (laminin-521). Interacts with SVEP1. As to expression, found in the basement membranes (major component).

It is found in the secreted. The protein localises to the extracellular space. It localises to the extracellular matrix. Its subcellular location is the basement membrane. Binding to cells via a high affinity receptor, laminin is thought to mediate the attachment, migration and organization of cells into tissues during embryonic development by interacting with other extracellular matrix components. This is Laminin subunit gamma-1 (Lamc1) from Mus musculus (Mouse).